The following is a 414-amino-acid chain: Bifunctional protein GlmU (414 aa).

The pyrophosphorylase stretch occupies residues 1–208 (MDAVILCAGS…SSKLYGIELN (208 aa)). UTP is bound by residues 6-9 (LCAG), Gln-74, and Gly-79. N-acetyl-alpha-D-glucosamine 1-phosphate is bound by residues Thr-80, Gly-130, Asn-142, and Asn-162. Positions 209–228 (GYWNDIGRPWDVLSANNYFL) are linker. An N-acetyltransferase region spans residues 229–414 (KNIMPKISGN…KDELIIKKRN (186 aa)). Residue His-312 is the Proton acceptor of the active site. Acetyl-CoA is bound by residues Ala-388 and Lys-405.

This sequence in the N-terminal section; belongs to the N-acetylglucosamine-1-phosphate uridyltransferase family. The protein in the C-terminal section; belongs to the transferase hexapeptide repeat family.

The enzyme catalyses N-acetyl-alpha-D-glucosamine 1-phosphate + UTP + H(+) = UDP-N-acetyl-alpha-D-glucosamine + diphosphate. It catalyses the reaction alpha-D-glucosamine 1-phosphate + acetyl-CoA = N-acetyl-alpha-D-glucosamine 1-phosphate + CoA + H(+). It participates in nucleotide-sugar biosynthesis; UDP-N-acetyl-alpha-D-glucosamine biosynthesis; N-acetyl-alpha-D-glucosamine 1-phosphate from alpha-D-glucosamine 6-phosphate (route II): step 2/2. The protein operates within nucleotide-sugar biosynthesis; UDP-N-acetyl-alpha-D-glucosamine biosynthesis; UDP-N-acetyl-alpha-D-glucosamine from N-acetyl-alpha-D-glucosamine 1-phosphate: step 1/1. In terms of biological role, catalyzes the last two sequential reactions in the de novo biosynthetic pathway for UDP-N-acetyl-glucosamine (UDP-GlcNAc). Responsible for the acetylation of GlcN-1-P to GlcNAc-1-P, and for the uridyl transfer from UTP to GlcNAc-1-P, to produce UDP-GlcNAc and pyrophosphate. In Methanococcus vannielii (strain ATCC 35089 / DSM 1224 / JCM 13029 / OCM 148 / SB), this protein is Bifunctional protein GlmU.